A 128-amino-acid chain; its full sequence is Probable 4-amino-4-deoxy-L-arabinose-phosphoundecaprenol flippase subunit ArnF (128 aa).

Residues 1-2 (MG) are Cytoplasmic-facing. Residues 3–23 (LIWGLFSVIIASVAQLSLGFA) form a helical membrane-spanning segment. At 24–35 (ASHLPPMTHLWD) the chain is on the periplasmic side. The chain crosses the membrane as a helical span at residues 36-56 (FIAALLAFGLDARILLLGLLG). Topologically, residues 57 to 76 (YLLSVFCWYKTLHKLALSKA) are cytoplasmic. The helical transmembrane segment at 77–97 (YALLSMSYVLVWIASMVLPGW) threads the bilayer. The Periplasmic segment spans residues 98–100 (EGT). The helical transmembrane segment at 101 to 121 (FSLKALLGVACIMSGLMLIFL) threads the bilayer. The Cytoplasmic portion of the chain corresponds to 122-128 (PTTKQRY).

It belongs to the ArnF family. Heterodimer of ArnE and ArnF.

The protein localises to the cell inner membrane. It participates in bacterial outer membrane biogenesis; lipopolysaccharide biosynthesis. In terms of biological role, translocates 4-amino-4-deoxy-L-arabinose-phosphoundecaprenol (alpha-L-Ara4N-phosphoundecaprenol) from the cytoplasmic to the periplasmic side of the inner membrane. This chain is Probable 4-amino-4-deoxy-L-arabinose-phosphoundecaprenol flippase subunit ArnF, found in Shigella boydii serotype 4 (strain Sb227).